The following is a 419-amino-acid chain: GTPase Obg (419 aa).

Residues 1–158 (MIFIDTAEII…RRLRLELKLV (158 aa)) form the Obg domain. Positions 159 to 328 (AHVGLVGLPN…LVDVLFELIS (170 aa)) constitute an OBG-type G domain. GTP contacts are provided by residues 165 to 172 (GLPNAGKS), 190 to 194 (FTTRS), 211 to 214 (DVPG), 281 to 284 (NKID), and 309 to 311 (SAA). 2 residues coordinate Mg(2+): serine 172 and threonine 192. Positions 344–419 (ELPPLPEDFS…VIHDKAFEIL (76 aa)) constitute an OCT domain.

Belongs to the TRAFAC class OBG-HflX-like GTPase superfamily. OBG GTPase family. In terms of assembly, monomer. Mg(2+) serves as cofactor.

It is found in the cytoplasm. Its function is as follows. An essential GTPase which binds GTP, GDP and possibly (p)ppGpp with moderate affinity, with high nucleotide exchange rates and a fairly low GTP hydrolysis rate. Plays a role in control of the cell cycle, stress response, ribosome biogenesis and in those bacteria that undergo differentiation, in morphogenesis control. The protein is GTPase Obg of Coprothermobacter proteolyticus (strain ATCC 35245 / DSM 5265 / OCM 4 / BT).